A 416-amino-acid polypeptide reads, in one-letter code: Nonsense-mediated decay protein 4 (416 aa).

3 disordered regions span residues 1–21 (MSLYPYNSDEDEARKNSNYHD), 195–218 (QHPIPQGESLESHNSFDETNYNNS), and 356–393 (DRPSKSKNKNKNKNTKKSTKPKQINGVVSDGCTGANGD). Residues 12–21 (EARKNSNYHD) are compositionally biased toward basic and acidic residues. Residues 360 to 375 (KSKNKNKNKNTKKSTK) show a composition bias toward basic residues.

The protein localises to the cytoplasm. Involved in nonsense-mediated decay of mRNAs containing premature stop codons. The protein is Nonsense-mediated decay protein 4 (NMD4) of Debaryomyces hansenii (strain ATCC 36239 / CBS 767 / BCRC 21394 / JCM 1990 / NBRC 0083 / IGC 2968) (Yeast).